Consider the following 53-residue polypeptide: uncharacterized protein (53 aa).

The protein belongs to the ycf15 family.

Its subcellular location is the plastid. The protein resides in the chloroplast. This is an uncharacterized protein from Helianthus annuus (Common sunflower).